Here is a 1749-residue protein sequence, read N- to C-terminus: MAAAAGGPCVRSSRELWTILLGRSALRELSQIEAELNKHWRRLLEGLSYYKPPSPSSAEKVKANKDVASPLKELGLRISKFLGLDEEQSVQLLQCYLQEDYRGTRDSVKTVLQDERQSQALILKIADYYYEERTCILRCVLHLLTYFQDERHPYRVEYADCVDKLEKELVSKYRQQFEELYKTEAPTWETHGNLMTERQVSRWFVQCLREQSMLLEIIFLYYAYFEMAPSDLLVLTKMFKEQGFGSRQTNRHLVDETMDPFVDRIGYFSALILVEGMDIESLHKCALDDRRELHQFAQDGLICQDMDCLMLTFGDIPHHAPVLLAWALLRHTLNPEETSSVVRKIGGTAIQLNVFQYLTRLLQSLASGGNDCTTSTACMCVYGLLSFVLTSLELHTLGNQQDIIDTACEVLADPSLPELFWGTEPTSGLGIILDSVCGMFPHLLSPLLQLLRALVSGKSTAKKVYSFLDKMSFYNELYKHKPHDVISHEDGTLWRRQTPKLLYPLGGQTNLRIPQGTVGQVMLDDRAYLVRWEYSYSSWTLFTCEIEMLLHVVSTADVIQHCQRVKPIIDLVHKVISTDLSIADCLLPITSRIYMLLQRLTTVISPPVDVIASCVNCLTVLAARNPAKVWTDLRHTGFLPFVAHPVSSLSQMISAEGMNAGGYGNLLMNSEQPQGEYGVTIAFLRLITTLVKGQLGSTQSQGLVPCVMFVLKEMLPSYHKWRYNSHGVREQIGCLILELIHAILNLCHETDLHSSHTPSLQFLCICSLAYTEAGQTVINIMGIGVDTIDMVMAAQPRSDGAEGQGQGQLLIKTVKLAFSVTNNVIRLKPPSNVVSPLEQALSQHGAHGNNLIAVLAKYIYHKHDPALPRLAIQLLKRLATVAPMSVYACLGNDAAAIRDAFLTRLQSKIEDMRIKVMILEFLTVAVETQPGLIELFLNLEVKDGSDGSKEFSLGMWSCLHAVLELIDSQQQDRYWCPPLLHRAAIAFLHALWQDRRDSAMLVLRTKPKFWENLTSPLFGTLSPPSETSEPSILETCALIMKIICLEIYYVVKGSLDQSLKDTLKKFSIEKRFAYWSGYVKSLAVHVAETEGSSCTSLLEYQMLVSAWRMLLIIATTHADIMHLTDSVVRRQLFLDVLDGTKALLLVPASVNCLRLGSMKCTLLLILLRQWKRELGSVDEILGPLTEILEGVLQADQQLMEKTKAKVFSAFITVLQMKEMKVSDIPQYSQLVLNVCETLQEEVIALFDQTRHSLALGSATEDKDSMETDDCSRSRHRDQRDGVCVLGLHLAKELCEVDEDGDSWLQVTRRLPILPTLLTTLEVSLRMKQNLHFTEATLHLLLTLARTQQGATAVAGAGITQSICLPLLSVYQLSTNGTAQTPSASRKSLDAPSWPGVYRLSMSLMEQLLKTLRYNFLPEALDFVGVHQERTLQCLNAVRTVQSLACLEEADHTVGFILQLSNFMKEWHFHLPQLMRDIQVNLGYLCQACTSLLHSRKMLQHYLQNKNGDGLPSAVAQRVQRPPSAASAAPSSSKQPAADTEASEQQALHTVQYGLLKILSKTLAALRHFTPDVCQILLDQSLDLAEYNFLFALSFTTPTFDSEVAPSFGTLLATVNVALNMLGELDKKKEPLTQAVGLSTQAEGTRTLKSLLMFTMENCFYLLISQAMRYLRDPAVHPRDKQRMKQELSSELSTLLSSLSRYFRRGAPSSPATGVLPSPQGKSTSLSKASPESQEPLIQLVQAFVRHMQR.

A2 carries the post-translational modification N-acetylalanine. Disordered regions lie at residues 1514–1542 (VAQRVQRPPSAASAAPSSSKQPAADTEAS) and 1707–1733 (PSSPATGVLPSPQGKSTSLSKASPESQ). Over residues 1521 to 1537 (PPSAASAAPSSSKQPAA) the composition is skewed to low complexity. Phosphoserine occurs at positions 1523 and 1709. Residue T1712 is modified to Phosphothreonine. S1717 bears the Phosphoserine mark. Over residues 1719 to 1732 (QGKSTSLSKASPES) the composition is skewed to polar residues.

Belongs to the Nup188 family. As to quaternary structure, part of the nuclear pore complex (NPC).

The protein resides in the nucleus. Its subcellular location is the nuclear pore complex. Functionally, component of the nuclear pore complex (NPC), a complex required for the trafficking across the nuclear envelope. Required for proper protein transport into the nucleus. The polypeptide is Nucleoporin NUP188 (NUP188) (Homo sapiens (Human)).